We begin with the raw amino-acid sequence, 365 residues long: MDYTVSSLQCFFLVLCLSLLVCSNSETSYKSNKKPILINFGDSNSDTGGVLAGVGLPIGLPHGITFFHRGTGRLGDGRLIVDFYCEHLKMTYLSPYLDSLSPNFKRGVNFAVSGATALPIFSFPLAIQIRQFVHFKNRSQELISSGRRDLIDDNGFRNALYMIDIGQNDLLLALYDSNLTYAPVVEKIPSMLLEIKKAIQTVYLYGGRKFWVHNTGPLGCAPKELAIHLHNDSDLDPIGCFRVHNEVAKAFNKGLLSLCNELRSQFKDATLVYVDIYSIKYKLSADFKLYGFVDPLMACCGYGGRPNNYDRKATCGQPGSTICRDVTKAIVWDGVHYTEAANRFVVDAVLTNRYSYPKNSLDRFW.

The signal sequence occupies residues 1–25; it reads MDYTVSSLQCFFLVLCLSLLVCSNS. The active-site Nucleophile is S43. N-linked (GlcNAc...) asparagine glycosylation is found at N137, N178, and N231. Active-site residues include D333 and H336.

The protein belongs to the 'GDSL' lipolytic enzyme family.

The protein localises to the secreted. This is GDSL esterase/lipase At3g62280 from Arabidopsis thaliana (Mouse-ear cress).